The sequence spans 395 residues: Elongation factor Tu (395 aa).

In terms of domain architecture, tr-type G spans 10 to 205 (KPHVNIGTIG…VDSYIPLPPR (196 aa)). Residues 19–26 (GHVDHGKT) are G1. GTP is bound at residue 19–26 (GHVDHGKT). Position 26 (Thr-26) interacts with Mg(2+). The G2 stretch occupies residues 60 to 64 (GITIN). Residues 81-84 (DCPG) are G3. GTP contacts are provided by residues 81–85 (DCPGH) and 136–139 (NKVD). Positions 136-139 (NKVD) are G4. Residues 174–176 (SAT) form a G5 region.

It belongs to the TRAFAC class translation factor GTPase superfamily. Classic translation factor GTPase family. EF-Tu/EF-1A subfamily. As to quaternary structure, monomer.

The protein localises to the cytoplasm. It carries out the reaction GTP + H2O = GDP + phosphate + H(+). Functionally, GTP hydrolase that promotes the GTP-dependent binding of aminoacyl-tRNA to the A-site of ribosomes during protein biosynthesis. The protein is Elongation factor Tu of Terrimonas ferruginea (Flavobacterium ferrugineum).